Reading from the N-terminus, the 337-residue chain is Heme A synthase (337 aa).

Helical transmembrane passes span 6–26, 87–107, 119–139, 154–174, and 192–212; these read ITKW…IGGI, FIHR…LIYF, LPYI…WYMV, LAFH…QLIK, and LIFS…GALV. Position 256 (His256) interacts with heme. The next 3 membrane-spanning stretches (helical) occupy residues 258–278, 285–305, and 308–328; these read LGSY…LTIE, IAYF…ITLL, and VPII…SIII. A heme-binding site is contributed by His316.

Belongs to the COX15/CtaA family. Type 2 subfamily. In terms of assembly, interacts with CtaB. Requires heme b as cofactor.

It localises to the cell membrane. It catalyses the reaction Fe(II)-heme o + 2 A + H2O = Fe(II)-heme a + 2 AH2. It participates in porphyrin-containing compound metabolism; heme A biosynthesis; heme A from heme O: step 1/1. Catalyzes the conversion of heme O to heme A by two successive hydroxylations of the methyl group at C8. The first hydroxylation forms heme I, the second hydroxylation results in an unstable dihydroxymethyl group, which spontaneously dehydrates, resulting in the formyl group of heme A. The chain is Heme A synthase from Rickettsia akari (strain Hartford).